The following is a 549-amino-acid chain: Threonine--tRNA ligase catalytic subunit (549 aa).

The interval 142-437 (DHRIIGDRLD…LLEHFRGKLP (296 aa)) is catalytic. Residues C235, H286, and H414 each contribute to the Zn(2+) site.

The protein belongs to the class-II aminoacyl-tRNA synthetase family. As to quaternary structure, homodimer. Probably interacts with its editing subunit. It depends on Zn(2+) as a cofactor.

The protein resides in the cytoplasm. It catalyses the reaction tRNA(Thr) + L-threonine + ATP = L-threonyl-tRNA(Thr) + AMP + diphosphate + H(+). Catalyzes the attachment of threonine to tRNA(Thr) in a two-step reaction: L-threonine is first activated by ATP to form Thr-AMP and then transferred to the acceptor end of tRNA(Thr). Also activates L-serine and transfers it to tRNA(Thr) but cannot deacylate incorrectly charged amino acid; unlike most archaea the editing function is found in a freestanding protein. This chain is Threonine--tRNA ligase catalytic subunit, found in Sulfolobus acidocaldarius (strain ATCC 33909 / DSM 639 / JCM 8929 / NBRC 15157 / NCIMB 11770).